Here is a 165-residue protein sequence, read N- to C-terminus: Nascent polypeptide-associated complex subunit beta (165 aa).

Disordered stretches follow at residues 1-34 (MDQA…TSGA) and 133-165 (QNMQ…KSVD). Residues 20–30 (TPRRKVKKVHK) are compositionally biased toward basic residues. The NAC-A/B domain maps to 33 to 110 (GADDKKLQAT…GEEKELTELV (78 aa)). Positions 145 to 158 (DDDEDDIPDLVEGE) are enriched in acidic residues.

It belongs to the NAC-beta family. In terms of assembly, part of the nascent polypeptide-associated complex (NAC), consisting of egd2 and egd1. NAC associates with ribosomes via egd1.

It is found in the cytoplasm. The protein resides in the nucleus. Its function is as follows. Component of the nascent polypeptide-associated complex (NAC), a dynamic component of the ribosomal exit tunnel, protecting the emerging polypeptides from interaction with other cytoplasmic proteins to ensure appropriate nascent protein targeting. The NAC complex also promotes mitochondrial protein import by enhancing productive ribosome interactions with the outer mitochondrial membrane and blocks the inappropriate interaction of ribosomes translating non-secretory nascent polypeptides with translocation sites in the membrane of the endoplasmic reticulum. EGD1 may act as a transcription factor that exert a negative effect on the expression of several genes that are transcribed by RNA polymerase II. This is Nascent polypeptide-associated complex subunit beta (egd1) from Emericella nidulans (strain FGSC A4 / ATCC 38163 / CBS 112.46 / NRRL 194 / M139) (Aspergillus nidulans).